We begin with the raw amino-acid sequence, 407 residues long: Triose phosphate/phosphate translocator, chloroplastic (407 aa).

The transit peptide at 1-81 (MESRVLSSGA…VKRDVLKPCS (81 aa)) directs the protein to the chloroplast. Residues 82-101 (ATASDSAGDAAPVGFLAKYP) lie on the Chloroplast intermembrane side of the membrane. A helical membrane pass occupies residues 102–122 (FLVTGFFFFMWYFLNVIFNIL). Residues 123–134 (NKKIYNYFPYPY) are Lumenal-facing. The helical transmembrane segment at 135 to 155 (FVSVIHLAVGVVYCLGSWTVG) threads the bilayer. The Chloroplast intermembrane segment spans residues 156–212 (LPKRAPVDSNILKLLIPVGFCHALGHVTSNVSFAAVAVSFTHTIKALEPFFNAAASQ). A helical transmembrane segment spans residues 213 to 233 (FVLGQSIPISLWLSLAPVVIG). Topologically, residues 234 to 277 (VSMASLTELSFNWLGFISAMISNISFTYRSIYSKKAMTDMDSTN) are lumenal. Residues 278-297 (LYAYISIIALLFCIPPAVLF) form a helical membrane-spanning segment. At 298–375 (EGPQLLKHGF…IVFGNKISTQ (78 aa)) the chain is on the chloroplast intermembrane side. A helical transmembrane segment spans residues 376–396 (TAIGTSIAIAGVAIYSLIKAR). The Lumenal segment spans residues 397–407 (IEEEKRRMKSA).

Belongs to the TPT transporter family. TPT (TC 2.A.7.9) subfamily. Homodimer.

It is found in the plastid. The protein resides in the chloroplast membrane. In terms of biological role, mediates the export of fixed carbons from the chloroplasts into the cytosol in the form of triose phosphates. In addition, it can also bind and transport phosphoenolpyruvate, thereby increasing the photosynthetic efficiency of C4-plants. In Flaveria trinervia (Clustered yellowtops), this protein is Triose phosphate/phosphate translocator, chloroplastic (TPT).